The following is a 189-amino-acid chain: Methylated-DNA--protein-cysteine methyltransferase (189 aa).

DNA is bound by residues Tyr-128 and Arg-142. Cys-159 functions as the Nucleophile; methyl group acceptor in the catalytic mechanism. Residue Ser-165 coordinates DNA.

It belongs to the MGMT family.

It localises to the nucleus. The catalysed reaction is a 6-O-methyl-2'-deoxyguanosine in DNA + L-cysteinyl-[protein] = S-methyl-L-cysteinyl-[protein] + a 2'-deoxyguanosine in DNA. The enzyme catalyses a 4-O-methyl-thymidine in DNA + L-cysteinyl-[protein] = a thymidine in DNA + S-methyl-L-cysteinyl-[protein]. In terms of biological role, involved in the cellular defense against the biological effects of O6-methylguanine (O6-MeG) and O4-methylthymine (O4-MeT) in DNA. Repairs the methylated nucleobase in DNA by stoichiometrically transferring the methyl group to a cysteine residue in the enzyme. This is a suicide reaction: the enzyme is irreversibly inactivated. In Kluyveromyces lactis (strain ATCC 8585 / CBS 2359 / DSM 70799 / NBRC 1267 / NRRL Y-1140 / WM37) (Yeast), this protein is Methylated-DNA--protein-cysteine methyltransferase (MGT1).